The chain runs to 426 residues: 3-phosphoshikimate 1-carboxyvinyltransferase (426 aa).

Lys-22, Ser-23, and Arg-27 together coordinate 3-phosphoshikimate. Lys-22 is a phosphoenolpyruvate binding site. Residues Gly-96 and Arg-124 each contribute to the phosphoenolpyruvate site. 3-phosphoshikimate contacts are provided by Ser-170, Ser-171, Gln-172, Ser-198, Asp-314, Asn-337, and Lys-341. Gln-172 lines the phosphoenolpyruvate pocket. The active-site Proton acceptor is the Asp-314. 3 residues coordinate phosphoenolpyruvate: Arg-345, Arg-387, and Lys-412.

This sequence belongs to the EPSP synthase family. As to quaternary structure, monomer.

The protein resides in the cytoplasm. The catalysed reaction is 3-phosphoshikimate + phosphoenolpyruvate = 5-O-(1-carboxyvinyl)-3-phosphoshikimate + phosphate. Its pathway is metabolic intermediate biosynthesis; chorismate biosynthesis; chorismate from D-erythrose 4-phosphate and phosphoenolpyruvate: step 6/7. In terms of biological role, catalyzes the transfer of the enolpyruvyl moiety of phosphoenolpyruvate (PEP) to the 5-hydroxyl of shikimate-3-phosphate (S3P) to produce enolpyruvyl shikimate-3-phosphate and inorganic phosphate. The chain is 3-phosphoshikimate 1-carboxyvinyltransferase from Shewanella baltica (strain OS155 / ATCC BAA-1091).